A 562-amino-acid polypeptide reads, in one-letter code: Apyrase (562 aa).

Residues 1-24 form the signal peptide; that stretch reads MAGRPGYSEVIFLYVVSVAVIARA. A divalent metal cation is bound by residues Asp47, His49, and Asp98. Asn112 is a glycosylation site (N-linked (GlcNAc...) asparagine). Residues Asn130, His233, and His257 each coordinate a divalent metal cation. Arg370 is an AMP binding site. The N-linked (GlcNAc...) asparagine glycan is linked to Asn390. The AMP site is built by Arg405, Phe424, and Asp514.

It belongs to the 5'-nucleotidase family. (Microbial infection) Interacts with Zika virus envelope protein E and Zika virus-like particles; the interaction does not affect Zika virus replication in human endothelial cells and keratinocytes. A divalent metal cation serves as cofactor. Post-translationally, the N-terminus is blocked. As to expression, female saliva (at protein level). Female salivary gland (at protein level). Not detected or low-level expression in female carcasses without salivary glands. Not detected in male tissues.

It localises to the secreted. It catalyses the reaction a ribonucleoside 5'-triphosphate + 2 H2O = a ribonucleoside 5'-phosphate + 2 phosphate + 2 H(+). Functionally, facilitates hematophagy by preventing ADP-, collagen- and thrombin-dependent platelet aggregation in the host. Cleaves adenosine triphosphate (ATP) and adenosine diphosphate (ADP) to adenosine monophosphate (AMP) and inorganic phosphate. May reduce probing time by facilitating the speed of locating blood. (Microbial infection) Does not affect Zika virus replication in human endothelial cells and keratinocytes. The protein is Apyrase of Aedes aegypti (Yellowfever mosquito).